The primary structure comprises 258 residues: Phosphonates import ATP-binding protein PhnC 1 (258 aa).

Residues 2–246 enclose the ABC transporter domain; that stretch reads IEFKDVGLVY…TFEEIYGRSI (245 aa). Residue 35–42 participates in ATP binding; the sequence is GLSGAGKS.

Belongs to the ABC transporter superfamily. Phosphonates importer (TC 3.A.1.9.1) family. As to quaternary structure, the complex is composed of two ATP-binding proteins (PhnC), two transmembrane proteins (PhnE) and a solute-binding protein (PhnD).

It is found in the cell membrane. The catalysed reaction is phosphonate(out) + ATP + H2O = phosphonate(in) + ADP + phosphate + H(+). Functionally, part of the ABC transporter complex PhnCDE involved in phosphonates import. Responsible for energy coupling to the transport system. This is Phosphonates import ATP-binding protein PhnC 1 from Oceanobacillus iheyensis (strain DSM 14371 / CIP 107618 / JCM 11309 / KCTC 3954 / HTE831).